Here is a 418-residue protein sequence, read N- to C-terminus: Tyrosine--tRNA ligase (418 aa).

An L-tyrosine-binding site is contributed by Y34. Residues 39 to 48 (PTADSLHLGH) carry the 'HIGH' region motif. L-tyrosine-binding residues include Y169 and Q173. The short motif at 229–233 (KFGKS) is the 'KMSKS' region element. K232 provides a ligand contact to ATP. The S4 RNA-binding domain maps to 352–410 (LNIVELLVTSGIVNSKRQAREDVQNGAIYVNGERVQDLDYTLSDSDKIDGELTVIRRGK).

It belongs to the class-I aminoacyl-tRNA synthetase family. TyrS type 1 subfamily. Homodimer.

Its subcellular location is the cytoplasm. The catalysed reaction is tRNA(Tyr) + L-tyrosine + ATP = L-tyrosyl-tRNA(Tyr) + AMP + diphosphate + H(+). Catalyzes the attachment of tyrosine to tRNA(Tyr) in a two-step reaction: tyrosine is first activated by ATP to form Tyr-AMP and then transferred to the acceptor end of tRNA(Tyr). In Streptococcus suis (strain 98HAH33), this protein is Tyrosine--tRNA ligase.